The primary structure comprises 509 residues: Cytochrome P450 4A10 (509 aa).

A run of 2 helical transmembrane segments spans residues 15–35 (LSGFLQVASVLGLLLLLVKAV) and 121–141 (LLAPWIGYGLLLLNGQPWFQH). Position 320 (glutamate 320) interacts with heme. Serine 439 bears the Phosphoserine mark. Cysteine 456 lines the heme pocket.

It belongs to the cytochrome P450 family. Heme serves as cofactor. As to expression, highly expressed in the kidneys of both genders.

It localises to the endoplasmic reticulum membrane. The protein resides in the microsome membrane. It carries out the reaction an omega-methyl-long-chain fatty acid + reduced [NADPH--hemoprotein reductase] + O2 = an omega-hydroxy-long-chain fatty acid + oxidized [NADPH--hemoprotein reductase] + H2O + H(+). It catalyses the reaction dodecanoate + reduced [NADPH--hemoprotein reductase] + O2 = 12-hydroxydodecanoate + oxidized [NADPH--hemoprotein reductase] + H2O + H(+). The catalysed reaction is dodecanoate + reduced [NADPH--hemoprotein reductase] + O2 = 11-hydroxydodecanoate + oxidized [NADPH--hemoprotein reductase] + H2O + H(+). The enzyme catalyses tetradecanoate + reduced [NADPH--hemoprotein reductase] + O2 = 14-hydroxytetradecanoate + oxidized [NADPH--hemoprotein reductase] + H2O + H(+). It carries out the reaction hexadecanoate + reduced [NADPH--hemoprotein reductase] + O2 = 16-hydroxyhexadecanoate + oxidized [NADPH--hemoprotein reductase] + H2O + H(+). It catalyses the reaction (9Z)-octadecenoate + reduced [NADPH--hemoprotein reductase] + O2 = 18-hydroxy-(9Z)-octadecenoate + oxidized [NADPH--hemoprotein reductase] + H2O + H(+). The catalysed reaction is (9Z,12Z)-octadecadienoate + reduced [NADPH--hemoprotein reductase] + O2 = 18-hydroxy-(9Z,12Z)-octadecadienoate + oxidized [NADPH--hemoprotein reductase] + H2O + H(+). The enzyme catalyses (9Z,12Z)-octadecadienoate + reduced [NADPH--hemoprotein reductase] + O2 = 17-hydroxy-(9Z,12Z)-octadecadienoate + oxidized [NADPH--hemoprotein reductase] + H2O + H(+). It carries out the reaction (5Z,8Z,11Z,14Z)-eicosatetraenoate + reduced [NADPH--hemoprotein reductase] + O2 = 20-hydroxy-(5Z,8Z,11Z,14Z)-eicosatetraenoate + oxidized [NADPH--hemoprotein reductase] + H2O + H(+). It catalyses the reaction 8,9-epoxy-(5Z,11Z,14Z)-eicosatrienoate + reduced [NADPH--hemoprotein reductase] + O2 = 20-hydroxy-8,9-epoxy-(5Z,11Z,14Z)-eicosatrienoate + oxidized [NADPH--hemoprotein reductase] + H2O + H(+). Functionally, a cytochrome P450 monooxygenase involved in the metabolism of fatty acids. Catalyzes predominantly the oxidation of the terminal carbon (omega-oxidation) of long-chain fatty acids. Acts as a major omega-hydroxylase for dodecanoic (lauric) acid in liver. In kidney, may play an important role in omega-hydroxylation of (5Z,8Z,11Z,14Z)-eicosatetraenoic acid (arachidonate) to 20-hydroxyeicosatetraenoic acid (20-HETE), a signaling molecule acting both as vasoconstrictive and natriuretic with overall effect on arterial blood pressure. Also participates in the formation of anti-inflammatory hydroxyepoxyeicosatrienoic acids (HEETs) in kidney by converting 8,9-epoxyeicosatrienoic acid (EET) to 20,8,9-HEET, an activator of PPARA. Displays substantially lower fatty acid omega-1 hydroxylase activity. Mechanistically, uses molecular oxygen inserting one oxygen atom into a substrate, and reducing the second into a water molecule, with two electrons provided by NADPH via cytochrome P450 reductase (CPR; NADPH-ferrihemoprotein reductase). This Mus musculus (Mouse) protein is Cytochrome P450 4A10.